Here is a 272-residue protein sequence, read N- to C-terminus: Dermonecrotic toxin LvSicTox-alphaIC1aiii (272 aa).

His-4 is an active-site residue. Mg(2+) contacts are provided by Glu-24 and Asp-26. His-40 functions as the Nucleophile in the catalytic mechanism. 2 cysteine pairs are disulfide-bonded: Cys-44–Cys-50 and Cys-46–Cys-189. Position 84 (Asp-84) interacts with Mg(2+).

Belongs to the arthropod phospholipase D family. Class II subfamily. Mg(2+) serves as cofactor. As to expression, expressed by the venom gland.

It is found in the secreted. The enzyme catalyses an N-(acyl)-sphingosylphosphocholine = an N-(acyl)-sphingosyl-1,3-cyclic phosphate + choline. It catalyses the reaction an N-(acyl)-sphingosylphosphoethanolamine = an N-(acyl)-sphingosyl-1,3-cyclic phosphate + ethanolamine. It carries out the reaction a 1-acyl-sn-glycero-3-phosphocholine = a 1-acyl-sn-glycero-2,3-cyclic phosphate + choline. The catalysed reaction is a 1-acyl-sn-glycero-3-phosphoethanolamine = a 1-acyl-sn-glycero-2,3-cyclic phosphate + ethanolamine. Its function is as follows. Dermonecrotic toxins cleave the phosphodiester linkage between the phosphate and headgroup of certain phospholipids (sphingolipid and lysolipid substrates), forming an alcohol (often choline) and a cyclic phosphate. This toxin acts on sphingomyelin (SM). It may also act on ceramide phosphoethanolamine (CPE), lysophosphatidylcholine (LPC) and lysophosphatidylethanolamine (LPE), but not on lysophosphatidylserine (LPS), and lysophosphatidylglycerol (LPG). It acts by transphosphatidylation, releasing exclusively cyclic phosphate products as second products. Induces dermonecrosis, hemolysis, increased vascular permeability, edema, inflammatory response, and platelet aggregation. In Loxosceles variegata (Recluse spider), this protein is Dermonecrotic toxin LvSicTox-alphaIC1aiii.